Here is a 132-residue protein sequence, read N- to C-terminus: CDGSH iron-sulfur domain-containing protein 2 homolog (132 aa).

Topologically, residues 1–35 (MEPISHLVKSSLPNYLSSLPVPDSLGGWFKLSFKD) are lumenal. The helical transmembrane segment at 36 to 58 (WLALIPPTAVLAGLGYTAYLAFC) threads the bilayer. Topologically, residues 59-132 (PAAQCSAKSA…VGPVVVSKKK (74 aa)) are cytoplasmic. Residues Cys97, Cys99, Cys108, and His112 each contribute to the [2Fe-2S] cluster site.

Belongs to the CISD protein family. CISD2 subfamily. [2Fe-2S] cluster is required as a cofactor.

It is found in the endoplasmic reticulum membrane. This is CDGSH iron-sulfur domain-containing protein 2 homolog from Drosophila grimshawi (Hawaiian fruit fly).